The primary structure comprises 142 residues: NTF2-related export protein 2 (142 aa).

The region spanning 17 to 136 is the NTF2 domain; sequence AAEEFVNIYY…WKIASDCFRF (120 aa).

In terms of assembly, associates with NXF1, NXF2, NXF3 and NXF5.

The protein resides in the nucleus. Its subcellular location is the cytoplasm. Functionally, regulator of protein export for NES-containing proteins. Also plays a role in mRNA nuclear export. This is NTF2-related export protein 2 (NXT2) from Bos taurus (Bovine).